A 446-amino-acid polypeptide reads, in one-letter code: tRNA-2-methylthio-N(6)-dimethylallyladenosine synthase (446 aa).

The MTTase N-terminal domain occupies 3–124 (KKLYIKTYGC…LPELISKVVR (122 aa)). The [4Fe-4S] cluster site is built by Cys12, Cys48, Cys87, Cys162, Cys166, and Cys169. Residues 148–380 (YPQGASSFIS…QKELAAQQLA (233 aa)) form the Radical SAM core domain. Positions 383 to 446 (ESCIGSTMKV…LNSLSGEIYR (64 aa)) constitute a TRAM domain.

Belongs to the methylthiotransferase family. MiaB subfamily. Monomer. It depends on [4Fe-4S] cluster as a cofactor.

Its subcellular location is the cytoplasm. The enzyme catalyses N(6)-dimethylallyladenosine(37) in tRNA + (sulfur carrier)-SH + AH2 + 2 S-adenosyl-L-methionine = 2-methylsulfanyl-N(6)-dimethylallyladenosine(37) in tRNA + (sulfur carrier)-H + 5'-deoxyadenosine + L-methionine + A + S-adenosyl-L-homocysteine + 2 H(+). In terms of biological role, catalyzes the methylthiolation of N6-(dimethylallyl)adenosine (i(6)A), leading to the formation of 2-methylthio-N6-(dimethylallyl)adenosine (ms(2)i(6)A) at position 37 in tRNAs that read codons beginning with uridine. In Rickettsia bellii (strain RML369-C), this protein is tRNA-2-methylthio-N(6)-dimethylallyladenosine synthase.